Reading from the N-terminus, the 274-residue chain is Orotidine 5'-phosphate decarboxylase (274 aa).

The span at 1–15 (MSAGRRSSGGRSAAA) shows a compositional bias: low complexity. Residues 1–21 (MSAGRRSSGGRSAAAPRFTPP) form a disordered region. Residues D32, K54, 99–108 (DLKLHDIPAT), T154, R215, Q224, G244, and R245 each bind substrate. The active-site Proton donor is the K101.

It belongs to the OMP decarboxylase family. Type 1 subfamily. In terms of assembly, homodimer.

It catalyses the reaction orotidine 5'-phosphate + H(+) = UMP + CO2. It participates in pyrimidine metabolism; UMP biosynthesis via de novo pathway; UMP from orotate: step 2/2. Functionally, catalyzes the decarboxylation of orotidine 5'-monophosphate (OMP) to uridine 5'-monophosphate (UMP). This chain is Orotidine 5'-phosphate decarboxylase, found in Frankia casuarinae (strain DSM 45818 / CECT 9043 / HFP020203 / CcI3).